A 362-amino-acid chain; its full sequence is Tyrosine-protein kinase SRK2 (362 aa).

The SH2 domain occupies 1–70 (TFLVRESESK…GLCVNLRQPC (70 aa)). Positions 95–348 (ITLIRKLGAG…ALQWRLEDFF (254 aa)) constitute a Protein kinase domain. ATP contacts are provided by residues 101-109 (LGAGQFGEV) and Lys-123. Asp-214 functions as the Proton acceptor in the catalytic mechanism.

Belongs to the protein kinase superfamily. Tyr protein kinase family.

It is found in the cytoplasm. The enzyme catalyses L-tyrosyl-[protein] + ATP = O-phospho-L-tyrosyl-[protein] + ADP + H(+). The chain is Tyrosine-protein kinase SRK2 (SRK2) from Spongilla lacustris (Freshwater sponge).